A 581-amino-acid polypeptide reads, in one-letter code: Leucine-rich repeat-containing protein 15 (581 aa).

Residues 1 to 21 (MPLKHYLLLLVGCQAWGAGLA) form the signal peptide. Positions 22 to 53 (YHGCPSECTCSRASQVECTGARIVAVPTPLPW) constitute an LRRNT domain. Residues 22–538 (YHGCPSECTC…VWGMTQAQSG (517 aa)) lie on the Extracellular side of the membrane. LRR repeat units follow at residues 54-75 (NAMSLQILNTHITELNESPFLN), 78-99 (ALIALRIEKNELSRITPGAFRN), 102-123 (SLRYLSLANNKLQVLPIGLFQG), 126-147 (SLESLLLSSNQLLQIQPAHFSQ), 150-171 (NLKELQLHGNHLEYIPDGAFDH), 174-195 (GLTKLNLGKNSLTHISPRVFQH), 198-219 (NLQVLRLYENRLTDIPMGTFDG), 222-243 (NLQELALQQNQIGLLSPGLFHN), 246-267 (NLQRLYLSNNHISQLPPSVFMQ), 270-291 (QLNRLTLFGNSLKELSPGIFGP), 294-315 (NLRELWLYDNHISSLPDNVFSN), 318-339 (QLQVLILSRNQISFISPGAFNG), 342-363 (ELRELSLHTNALQDLDGNVFRM), 366-387 (NLQNISLQNNRLRQLPGNIFAN), and 390-411 (GLMAIQLQNNQLENLPLGIFDH). N75 is a glycosylation site (N-linked (GlcNAc...) asparagine). The N-linked (GlcNAc...) asparagine glycan is linked to N369. The region spanning 423 to 475 (NPWRCDSDILPLRNWLLLNQPRLGTDTVPVCFSPANVRGQSLIIINVNVAVPS) is the LRRCT domain. Residues 489–509 (WYPDTPSYPDTTSVSSTTELT) are disordered. A compositionally biased stretch (low complexity) spans 499 to 509 (TTSVSSTTELT). The helical transmembrane segment at 539–559 (LAIAAIVIGIVALACSLAACV) threads the bilayer. The Cytoplasmic portion of the chain corresponds to 560–581 (GCCCCKKRSQAVLMQMKAPNEC).

As to quaternary structure, (Microbial infection) Interacts with human coronavirus SARS-CoV-2 spike protein (via RBD domain); the interaction is direct and sequesters virions at the cell surface. (Microbial infection) Interacts with human coronavirus SARS-CoV-2 spike protein (via RBD domain); the interaction is direct. In terms of tissue distribution, expressed in brain and placenta. Expressed in lung fibroblasts. Expressed in chodrocytes.

It is found in the cell membrane. In terms of biological role, (Microbial infection) Modulates the ability of SARS-CoV-2 to infect host cells through interaction with the spike protein. Does not act as a SARS-CoV-2 entry receptor but sequesters virions and antagonizes in trans SARS-CoV-2 infection of ACE2(+) cells when expressed on nearby cells. The protein is Leucine-rich repeat-containing protein 15 (LRRC15) of Homo sapiens (Human).